Here is a 464-residue protein sequence, read N- to C-terminus: Chromosomal replication initiator protein DnaA (464 aa).

The segment at 1-74 (MDAVGYEVFW…ERKFLELSGH (74 aa)) is domain I, interacts with DnaA modulators. The tract at residues 74 to 117 (HPIKLLFAVKKGTPHGNTAPPKHVHTYLEKNSPAEVPSKKSFHP) is domain II. A domain III, AAA+ region region spans residues 118–341 (DLNRDYTFEN…GALTKIIAFI (224 aa)). ATP-binding residues include Gly-162, Gly-164, Lys-165, and Thr-166. The domain IV, binds dsDNA stretch occupies residues 342 to 464 (EVSGSITIDI…LKSKVQDSIR (123 aa)).

Belongs to the DnaA family. Oligomerizes as a right-handed, spiral filament on DNA at oriC.

It is found in the cytoplasm. Functionally, plays an essential role in the initiation and regulation of chromosomal replication. ATP-DnaA binds to the origin of replication (oriC) to initiate formation of the DNA replication initiation complex once per cell cycle. Binds the DnaA box (a 9 base pair repeat at the origin) and separates the double-stranded (ds)DNA. Forms a right-handed helical filament on oriC DNA; dsDNA binds to the exterior of the filament while single-stranded (ss)DNA is stabiized in the filament's interior. The ATP-DnaA-oriC complex binds and stabilizes one strand of the AT-rich DNA unwinding element (DUE), permitting loading of DNA polymerase. After initiation quickly degrades to an ADP-DnaA complex that is not apt for DNA replication. Binds acidic phospholipids. The protein is Chromosomal replication initiator protein DnaA of Treponema pallidum (strain Nichols).